Reading from the N-terminus, the 270-residue chain is NAD(P)H-hydrate epimerase (270 aa).

Positions 25–234 (FQQLMDLMQN…DLLAPEAIYQ (210 aa)) constitute a YjeF N-terminal domain. 73–77 (DNGGQ) serves as a coordination point for (6S)-NADPHX. Positions 74 and 144 each coordinate K(+). (6S)-NADPHX-binding positions include 148–154 (GVGLYGH) and E177. A K(+)-binding site is contributed by T180.

Belongs to the NnrE/AIBP family. K(+) is required as a cofactor.

It carries out the reaction (6R)-NADHX = (6S)-NADHX. It catalyses the reaction (6R)-NADPHX = (6S)-NADPHX. Catalyzes the epimerization of the S- and R-forms of NAD(P)HX, a damaged form of NAD(P)H that is a result of enzymatic or heat-dependent hydration. This is a prerequisite for the S-specific NAD(P)H-hydrate dehydratase to allow the repair of both epimers of NAD(P)HX. The polypeptide is NAD(P)H-hydrate epimerase (Legionella pneumophila (strain Corby)).